The primary structure comprises 227 residues: Uracil-DNA glycosylase (227 aa).

Catalysis depends on Asp-64, which acts as the Proton acceptor.

The protein belongs to the uracil-DNA glycosylase (UDG) superfamily. UNG family.

The protein resides in the cytoplasm. It carries out the reaction Hydrolyzes single-stranded DNA or mismatched double-stranded DNA and polynucleotides, releasing free uracil.. Excises uracil residues from the DNA which can arise as a result of misincorporation of dUMP residues by DNA polymerase or due to deamination of cytosine. The protein is Uracil-DNA glycosylase of Serratia proteamaculans (strain 568).